The chain runs to 412 residues: Gamma-glutamyl phosphate reductase (412 aa).

Belongs to the gamma-glutamyl phosphate reductase family.

The protein resides in the cytoplasm. It catalyses the reaction L-glutamate 5-semialdehyde + phosphate + NADP(+) = L-glutamyl 5-phosphate + NADPH + H(+). It participates in amino-acid biosynthesis; L-proline biosynthesis; L-glutamate 5-semialdehyde from L-glutamate: step 2/2. Catalyzes the NADPH-dependent reduction of L-glutamate 5-phosphate into L-glutamate 5-semialdehyde and phosphate. The product spontaneously undergoes cyclization to form 1-pyrroline-5-carboxylate. The sequence is that of Gamma-glutamyl phosphate reductase from Aliarcobacter butzleri (strain RM4018) (Arcobacter butzleri).